A 310-amino-acid polypeptide reads, in one-letter code: Homoserine kinase (310 aa).

Residue 91–101 participates in ATP binding; sequence PIGSGLGSSAC.

Belongs to the GHMP kinase family. Homoserine kinase subfamily.

It is found in the cytoplasm. The enzyme catalyses L-homoserine + ATP = O-phospho-L-homoserine + ADP + H(+). It participates in amino-acid biosynthesis; L-threonine biosynthesis; L-threonine from L-aspartate: step 4/5. Catalyzes the ATP-dependent phosphorylation of L-homoserine to L-homoserine phosphate. The chain is Homoserine kinase from Escherichia coli O81 (strain ED1a).